Reading from the N-terminus, the 139-residue chain is Putative pre-16S rRNA nuclease (139 aa).

The protein belongs to the YqgF nuclease family.

Its subcellular location is the cytoplasm. Functionally, could be a nuclease involved in processing of the 5'-end of pre-16S rRNA. This is Putative pre-16S rRNA nuclease from Streptococcus pyogenes serotype M49 (strain NZ131).